The chain runs to 309 residues: Glutaminase (309 aa).

Substrate-binding residues include S64, N114, E160, N167, Y191, Y243, and V261.

Belongs to the glutaminase family. Homotetramer.

It carries out the reaction L-glutamine + H2O = L-glutamate + NH4(+). The polypeptide is Glutaminase (Methylobacterium radiotolerans (strain ATCC 27329 / DSM 1819 / JCM 2831 / NBRC 15690 / NCIMB 10815 / 0-1)).